The sequence spans 153 residues: Movement protein (153 aa).

2 disordered regions span residues 1 to 24 and 107 to 153; these read MAQEGGAVEQFGQWLWSNPIEQDP and ALSL…RNQR. Composition is skewed to polar residues over residues 109-122 and 140-153; these read SLLSSTPRASNQPW and GQRQLMGRNSRNQR.

The protein belongs to the luteoviruses movement protein family.

It localises to the host nucleus envelope. Transports viral genome to neighboring plant cells directly through plasmosdesmata, without any budding. The movement protein allows efficient cell to cell propagation, by bypassing the host cell wall barrier. Acts as a suppressor of RNA-mediated gene silencing, also known as post-transcriptional gene silencing (PTGS), a mechanism of plant viral defense that limits the accumulation of viral RNAs. The sequence is that of Movement protein from Avena byzantina (Oat).